Here is a 377-residue protein sequence, read N- to C-terminus: Apelin receptor (377 aa).

At 1-28 (MEDDGYNYYGADNQSECDYADWKPSGAL) the chain is on the extracellular side. Asn-13 carries an N-linked (GlcNAc...) asparagine glycan. Disulfide bonds link Cys-17-Cys-279 and Cys-100-Cys-179. Residues 29 to 52 (IPAIYMLVFLLGTTGNGLVLWTVF) form a helical membrane-spanning segment. At 53-62 (RTSREKRRSA) the chain is on the cytoplasmic side. A helical transmembrane segment spans residues 63–84 (DIFIASLAVADLTFVVTLPLWA). Over 85–97 (TYTYREFDWPFGT) the chain is Extracellular. A helical membrane pass occupies residues 98–123 (FSCKLSSYLIFVNMYASVFCLTGLSF). Over 124–144 (DRYLAIVRPVANARLRLRVSG) the chain is Cytoplasmic. A helical transmembrane segment spans residues 145 to 162 (AVATAVLWVLAALLAVPV). Topologically, residues 163 to 196 (MVFRSTDASENGTKIQCYMDYSMVATSNSEWAWE) are extracellular. Residue Asn-173 is glycosylated (N-linked (GlcNAc...) asparagine). A helical membrane pass occupies residues 197–221 (VGLGVSSTAVGFVVPFTIMLTCYFF). Residues 222 to 244 (IAQTIAGHFRKERIEGLRKRRRL) are Cytoplasmic-facing. A helical transmembrane segment spans residues 245–268 (LSIIVVLVVTFALCWMPYHLVKTL). Topologically, residues 269–287 (YMLGSLLHWPCDFDIFLMN) are extracellular. A helical membrane pass occupies residues 288–310 (VFPYCTCISYVNSCLNPFLYAFF). At 311–377 (DPRFRQACTS…IPYSQETLVD (67 aa)) the chain is on the cytoplasmic side. Residues 334–377 (HSSSAEKSASYSSGHSQGPGPNMGKGGEQMHEKSIPYSQETLVD) form a disordered region. Low complexity predominate over residues 335–349 (SSSAEKSASYSSGHS).

This sequence belongs to the G-protein coupled receptor 1 family. In terms of assembly, homodimer; dimerization inhibits APLNR-mediated G protein and beta-arrestin signaling pathways compared to monomeric APLNR. As to expression, expressed in coronary endothelial cells (at protein level). Expressed in the embryo, allantoic and endothelial precursor cells of the yolk sac at 8 days post-coitum (dpc). Expressed in the secondary heart field and somite at 8.25 dpc. Expressed in fetal allantoic endothelial cells at 9 dpc. Expressed in the allantoid and the invading fetal vasculature of the placenta at 9.5 dpc. Expressed in endothelial cells adjacent to syncytiotrophoblast cells at 10.5 dpc. Expressed weakly in the embryonic heart at 11.5 dpc. Expressed in the adult heart. Expressed in endothelial cells and cardiomyocytes and weakly expressed in fibroblasts.

It localises to the cell membrane. Functionally, g protein-coupled receptor for peptide hormones apelin (APLN) and apelin receptor early endogenous ligand (APELA), that plays a role in the regulation of normal cardiovascular function and fluid homeostasis. When acting as apelin receptor, activates both G(i) protein pathway that inhibits adenylate cyclase activity, and the beta-arrestin pathway leading to internalization of the receptor. APLNR/APJ receptor is also activated by mechanical strech in a G-protein-independent fashion to induce beta-arrestin signaling leading to cardiac hypertrophy. However, the presence of apelin ligand blunts cardiac hypertrophic induction from APLNR/APJ on response to pathological stimuli. Plays a key role in early development such as gastrulation, blood vessels formation and heart morphogenesis by acting as a receptor for APELA hormone. May promote angioblast migration toward the embryonic midline, i.e. the position of the future vessel formation, during vasculogenesis. Promotes sinus venosus (SV)-derived endothelial cells migration into the developing heart to promote coronary blood vessel development. Also plays a role in various processes in adults such as regulation of blood vessel formation, blood pressure and heart contractility and protection from cardiac hypertrophy and heart failure. The chain is Apelin receptor from Mus musculus (Mouse).